A 101-amino-acid chain; its full sequence is MAKKSKIAKNEQRKVVVERYAAKRAELKKALVDPNGTDESREAARLGLQKLPRDASPIRVRNRDAVDGRPRGNLSKFGISRVRFRDMAHRGELPGITKSSW.

Belongs to the universal ribosomal protein uS14 family. Part of the 30S ribosomal subunit. Contacts proteins S3 and S10.

Its function is as follows. Binds 16S rRNA, required for the assembly of 30S particles and may also be responsible for determining the conformation of the 16S rRNA at the A site. The protein is Small ribosomal subunit protein uS14 of Leifsonia xyli subsp. xyli (strain CTCB07).